The following is a 66-amino-acid chain: Large ribosomal subunit protein bL31 (66 aa).

4 residues coordinate Zn(2+): Cys-16, Cys-18, Cys-36, and Cys-39.

It belongs to the bacterial ribosomal protein bL31 family. Type A subfamily. As to quaternary structure, part of the 50S ribosomal subunit. The cofactor is Zn(2+).

Its function is as follows. Binds the 23S rRNA. The chain is Large ribosomal subunit protein bL31 from Sulfurovum sp. (strain NBC37-1).